The sequence spans 230 residues: Prolactin-3D1 (230 aa).

An N-terminal signal peptide occupies residues 1-29 (MQLTLTLSRASGMQLFLLVSSLLLWEKVA). 2 disulfides stabilise this stretch: cysteine 81-cysteine 200 and cysteine 217-cysteine 225. Asparagine 109 and asparagine 158 each carry an N-linked (GlcNAc...) asparagine glycan.

It belongs to the somatotropin/prolactin family.

It is found in the secreted. This chain is Prolactin-3D1 (Prl3d1), found in Rattus norvegicus (Rat).